A 359-amino-acid chain; its full sequence is MSGLEHGDASSPVPESDAELAFEGALRPRSLSEFVGQVKVRGQLELLLTAAAMQNRSPDHILLAGPPGLGKTTLAMIVAEESRRPLRLTSGPAIQHAGDLAAVLSALVPGEILFVDEIHRMARSAEEMLYLAMEDYRIDIMVGKGAGATSIPLELSPFTLVGATTRSGMLPSPLRDRFGFTAHLEFYETHELEQVIERAARMLHLEIEHEAVAEIAGRCRGTPRIANRLLRRVRDYALVHGTEAGLESVRAALDLYDVDPLGLDRLDRAVMRGILTRFGGGPVGLNTLAVSVGEEAETIESVVEPFLVRIGLVTRTPRGRVATPAAWEHFGLEAPAAPGAPARASGPASVAGALFGDEL.

A large ATPase domain (RuvB-L) region spans residues 1–187; the sequence is MSGLEHGDAS…FGFTAHLEFY (187 aa). ATP contacts are provided by residues L26, R27, G68, K71, T72, T73, 134–136, R177, Y187, and R224; that span reads EDY. T72 provides a ligand contact to Mg(2+). The segment at 188–257 is small ATPAse domain (RuvB-S); it reads ETHELEQVIE…SVRAALDLYD (70 aa). The segment at 260-359 is head domain (RuvB-H); it reads PLGLDRLDRA…VAGALFGDEL (100 aa). Residues R315 and R320 each coordinate DNA.

This sequence belongs to the RuvB family. Homohexamer. Forms an RuvA(8)-RuvB(12)-Holliday junction (HJ) complex. HJ DNA is sandwiched between 2 RuvA tetramers; dsDNA enters through RuvA and exits via RuvB. An RuvB hexamer assembles on each DNA strand where it exits the tetramer. Each RuvB hexamer is contacted by two RuvA subunits (via domain III) on 2 adjacent RuvB subunits; this complex drives branch migration. In the full resolvosome a probable DNA-RuvA(4)-RuvB(12)-RuvC(2) complex forms which resolves the HJ.

The protein resides in the cytoplasm. The enzyme catalyses ATP + H2O = ADP + phosphate + H(+). Functionally, the RuvA-RuvB-RuvC complex processes Holliday junction (HJ) DNA during genetic recombination and DNA repair, while the RuvA-RuvB complex plays an important role in the rescue of blocked DNA replication forks via replication fork reversal (RFR). RuvA specifically binds to HJ cruciform DNA, conferring on it an open structure. The RuvB hexamer acts as an ATP-dependent pump, pulling dsDNA into and through the RuvAB complex. RuvB forms 2 homohexamers on either side of HJ DNA bound by 1 or 2 RuvA tetramers; 4 subunits per hexamer contact DNA at a time. Coordinated motions by a converter formed by DNA-disengaged RuvB subunits stimulates ATP hydrolysis and nucleotide exchange. Immobilization of the converter enables RuvB to convert the ATP-contained energy into a lever motion, pulling 2 nucleotides of DNA out of the RuvA tetramer per ATP hydrolyzed, thus driving DNA branch migration. The RuvB motors rotate together with the DNA substrate, which together with the progressing nucleotide cycle form the mechanistic basis for DNA recombination by continuous HJ branch migration. Branch migration allows RuvC to scan DNA until it finds its consensus sequence, where it cleaves and resolves cruciform DNA. The sequence is that of Holliday junction branch migration complex subunit RuvB from Clavibacter michiganensis subsp. michiganensis (strain NCPPB 382).